We begin with the raw amino-acid sequence, 453 residues long: Acyl-coenzyme A thioesterase 2, mitochondrial (453 aa).

The N-terminal 42 residues, 1 to 42, are a transit peptide targeting the mitochondrion; it reads MVASSFAVLRASRLCQQDWKSWARLFVPPPLSTGGRTTWART. Lysine 83 carries the N6-acetyllysine modification. Active-site charge relay system residues include serine 273, aspartate 365, and histidine 399. Position 447 is an N6-succinyllysine (lysine 447).

Belongs to the C/M/P thioester hydrolase family. Monomer. Highly expressed in brown and white adipose tissue, muscle, heart, kidney, lung, adrenal gland and spleen; weakly expressed in intestine, testis and brain.

The protein resides in the mitochondrion matrix. It carries out the reaction hexadecanoyl-CoA + H2O = hexadecanoate + CoA + H(+). The enzyme catalyses tetradecanoyl-CoA + H2O = tetradecanoate + CoA + H(+). It catalyses the reaction octadecanoyl-CoA + H2O = octadecanoate + CoA + H(+). The catalysed reaction is eicosanoyl-CoA + H2O = eicosanoate + CoA + H(+). It carries out the reaction decanoyl-CoA + H2O = decanoate + CoA + H(+). The enzyme catalyses dodecanoyl-CoA + H2O = dodecanoate + CoA + H(+). It catalyses the reaction (9Z)-octadecenoyl-CoA + H2O = (9Z)-octadecenoate + CoA + H(+). The catalysed reaction is (9Z)-hexadecenoyl-CoA + H2O = (9Z)-hexadecenoate + CoA + H(+). It carries out the reaction (9E)-octadecenoyl-CoA + H2O = (9E)-octadecenoate + CoA + H(+). The enzyme catalyses (9Z,12Z)-octadecadienoyl-CoA + H2O = (9Z,12Z)-octadecadienoate + CoA + H(+). It functions in the pathway lipid metabolism; fatty acid metabolism. Functionally, catalyzes the hydrolysis of acyl-CoAs into free fatty acids and coenzyme A (CoASH), regulating their respective intracellular levels. Displays higher activity toward long chain acyl CoAs (C14-C20). The enzyme is involved in enhancing the hepatic fatty acid oxidation in mitochondria. The sequence is that of Acyl-coenzyme A thioesterase 2, mitochondrial (Acot2) from Mus musculus (Mouse).